A 282-amino-acid polypeptide reads, in one-letter code: Phosphatidylserine decarboxylase proenzyme (282 aa).

Active-site charge relay system; for autoendoproteolytic cleavage activity residues include aspartate 88, histidine 144, and serine 247. The active-site Schiff-base intermediate with substrate; via pyruvic acid; for decarboxylase activity is the serine 247. Serine 247 carries the pyruvic acid (Ser); by autocatalysis modification.

Belongs to the phosphatidylserine decarboxylase family. PSD-B subfamily. Prokaryotic type I sub-subfamily. As to quaternary structure, heterodimer of a large membrane-associated beta subunit and a small pyruvoyl-containing alpha subunit. Requires pyruvate as cofactor. Post-translationally, is synthesized initially as an inactive proenzyme. Formation of the active enzyme involves a self-maturation process in which the active site pyruvoyl group is generated from an internal serine residue via an autocatalytic post-translational modification. Two non-identical subunits are generated from the proenzyme in this reaction, and the pyruvate is formed at the N-terminus of the alpha chain, which is derived from the carboxyl end of the proenzyme. The autoendoproteolytic cleavage occurs by a canonical serine protease mechanism, in which the side chain hydroxyl group of the serine supplies its oxygen atom to form the C-terminus of the beta chain, while the remainder of the serine residue undergoes an oxidative deamination to produce ammonia and the pyruvoyl prosthetic group on the alpha chain. During this reaction, the Ser that is part of the protease active site of the proenzyme becomes the pyruvoyl prosthetic group, which constitutes an essential element of the active site of the mature decarboxylase.

The protein resides in the cell membrane. It carries out the reaction a 1,2-diacyl-sn-glycero-3-phospho-L-serine + H(+) = a 1,2-diacyl-sn-glycero-3-phosphoethanolamine + CO2. The protein operates within phospholipid metabolism; phosphatidylethanolamine biosynthesis; phosphatidylethanolamine from CDP-diacylglycerol: step 2/2. Its function is as follows. Catalyzes the formation of phosphatidylethanolamine (PtdEtn) from phosphatidylserine (PtdSer). The chain is Phosphatidylserine decarboxylase proenzyme from Xanthomonas oryzae pv. oryzae (strain KACC10331 / KXO85).